The sequence spans 45 residues: Proteinase inhibitor IIA (45 aa).

3 cysteine pairs are disulfide-bonded: Cys10–Cys24, Cys14–Cys35, and Cys20–Cys43.

This sequence belongs to the protease inhibitor I20 (potato type II proteinase inhibitor) family.

It localises to the secreted. Its function is as follows. Inhibits trypsin strongly and chymotrypsin temporarily. In Solanum tuberosum (Potato), this protein is Proteinase inhibitor IIA.